Here is an 80-residue protein sequence, read N- to C-terminus: UPF0125 protein XF_2346 (80 aa).

This sequence belongs to the UPF0125 (RnfH) family.

The protein is UPF0125 protein XF_2346 of Xylella fastidiosa (strain 9a5c).